A 101-amino-acid polypeptide reads, in one-letter code: Small ribosomal subunit protein uS10 (101 aa).

The protein belongs to the universal ribosomal protein uS10 family. As to quaternary structure, part of the 30S ribosomal subunit.

In terms of biological role, involved in the binding of tRNA to the ribosomes. The polypeptide is Small ribosomal subunit protein uS10 (Christiangramia forsetii (strain DSM 17595 / CGMCC 1.15422 / KT0803) (Gramella forsetii)).